The chain runs to 68 residues: Large ribosomal subunit protein uL29 (68 aa).

The tract at residues 32 to 68 is disordered; sequence QDQLKRRTGSLDNPAERTQHRRDLARVLTVLTQKTKA. The span at 45 to 56 shows a compositional bias: basic and acidic residues; the sequence is PAERTQHRRDLA.

It belongs to the universal ribosomal protein uL29 family.

This Myxococcus xanthus (strain DK1622) protein is Large ribosomal subunit protein uL29.